A 90-amino-acid polypeptide reads, in one-letter code: Barrier-to-autointegration factor-like protein (90 aa).

It belongs to the BAF family. As to quaternary structure, homodimer. Heterodimerizes with BANF1.

It is found in the nucleus. The protein localises to the cytoplasm. In terms of biological role, may play a role in BANF1 regulation and influence tissue-specific roles of BANF1. In Bos taurus (Bovine), this protein is Barrier-to-autointegration factor-like protein (BANF2).